Here is a 714-residue protein sequence, read N- to C-terminus: Polyribonucleotide nucleotidyltransferase (714 aa).

2 residues coordinate Mg(2+): aspartate 488 and aspartate 494. Positions 555 to 614 (PRIEVMNIPTDKIRDVIGSGGKVIREIVEKTGAKINIEDDGTVKIASSNGKEIEAAKKWI) constitute a KH domain. The region spanning 624–692 (GEIYEGTVVK…ERGKVRLSMK (69 aa)) is the S1 motif domain.

The protein belongs to the polyribonucleotide nucleotidyltransferase family. Requires Mg(2+) as cofactor.

The protein resides in the cytoplasm. It catalyses the reaction RNA(n+1) + phosphate = RNA(n) + a ribonucleoside 5'-diphosphate. Functionally, involved in mRNA degradation. Catalyzes the phosphorolysis of single-stranded polyribonucleotides processively in the 3'- to 5'-direction. The chain is Polyribonucleotide nucleotidyltransferase from Brucella suis biovar 1 (strain 1330).